Consider the following 172-residue polypeptide: Signal peptidase complex catalytic subunit SEC11 (172 aa).

The Cytoplasmic portion of the chain corresponds to 1–14 (MLSSLQNPRQAAAQ). A helical; Signal-anchor for type II membrane protein transmembrane segment spans residues 15–35 (LMNFGLILSTAFMMWKGLSVI). At 36 to 172 (TDSPSPIVVV…MGLVVVLQRE (137 aa)) the chain is on the lumenal side. Residues Ser-49, His-90, and Asp-115 each act as charge relay system in the active site. The interval 158–169 (VMLGIMGLVVVL) is C-terminal short (CTS) helix.

It belongs to the peptidase S26B family. Component of the signal peptidase complex (SPC) composed of a catalytic subunit SEC11 and three accessory subunits SPC1, SPC2 and SPC3. The complex induces a local thinning of the ER membrane which is used to measure the length of the signal peptide (SP) h-region of protein substrates. This ensures the selectivity of the complex towards h-regions shorter than 18-20 amino acids. SPC associates with the translocon complex.

The protein localises to the endoplasmic reticulum membrane. The catalysed reaction is Cleavage of hydrophobic, N-terminal signal or leader sequences from secreted and periplasmic proteins.. Catalytic component of the signal peptidase complex (SPC) which catalyzes the cleavage of N-terminal signal sequences from nascent proteins as they are translocated into the lumen of the endoplasmic reticulum. Specifically cleaves N-terminal signal peptides that contain a hydrophobic alpha-helix (h-region) shorter than 18-20 amino acids. The sequence is that of Signal peptidase complex catalytic subunit SEC11 (SEC11) from Chaetomium globosum (strain ATCC 6205 / CBS 148.51 / DSM 1962 / NBRC 6347 / NRRL 1970) (Soil fungus).